A 450-amino-acid chain; its full sequence is MSLLQFSGLFVVWLLCTLFIATLTWFEFRRVRFNFNVFFSLLFLLTFFFGFPLTSVLVFRFDVGVAPPEILLQALLSAGCFYAVYYVTYKTRLRKRVADVPRRPLFTMNRVETNLTWVILMGIALVSVGIFFMHNGFLLFRLNSYSQIFSSEVSGVALKRFFYFFIPAMLVVYFLRQDSKAWLFFLVSTVAFGLLTYMIVGGTRANIIIAFAIFLFIGIIRGWISLWMLAAAGVLGIVGMFWLALKRYGMNVSGDEAFYTFLYLTRDTFSPWENLALLLQNYDNIDFQGLAPIVRDFYVFIPSWLWPGRPSMVLNSANYFTREVLNNHSGLAISPTLIGSLVVMGGALFIPLGAIVVGLIIKWFDWLYELGNREPNRYKAAILHSFCFGAIFNMIVLAREGLDSFVSRVVFFIVVFGACLMIAKLLYWLFESAGLIHKRTKSSLRTQVEG.

11 helical membrane passes run 6–26 (FSGLFVVWLLCTLFIATLTWF), 37–57 (VFFSLLFLLTFFFGFPLTSVL), 63–83 (VGVAPPEILLQALLSAGCFYA), 118–138 (VILMGIALVSVGIFFMHNGFL), 155–175 (GVALKRFFYFFIPAMLVVYFL), 181–201 (AWLFFLVSTVAFGLLTYMIVG), 207–227 (IIIAFAIFLFIGIIRGWISLW), 228–248 (MLAAAGVLGIVGMFWLALKRY), 341–361 (LVVMGGALFIPLGAIVVGLII), 378–398 (YKAAILHSFCFGAIFNMIVLA), and 410–430 (VFFIVVFGACLMIAKLLYWLF).

Belongs to the WzyE family. In terms of assembly, probably part of a complex composed of WzxE, WzyE and WzzE.

It is found in the cell inner membrane. It functions in the pathway bacterial outer membrane biogenesis; enterobacterial common antigen biosynthesis. In terms of biological role, probably involved in the polymerization of enterobacterial common antigen (ECA) trisaccharide repeat units. In Shigella boydii serotype 18 (strain CDC 3083-94 / BS512), this protein is Probable ECA polymerase.